The chain runs to 292 residues: NAD kinase (292 aa).

Catalysis depends on Asp-73, which acts as the Proton acceptor. NAD(+)-binding positions include 73–74 (DG), 147–148 (NE), His-158, Arg-175, Asp-177, 188–193 (TAYSLS), and Gln-247.

This sequence belongs to the NAD kinase family. The cofactor is a divalent metal cation.

The protein resides in the cytoplasm. The enzyme catalyses NAD(+) + ATP = ADP + NADP(+) + H(+). Its function is as follows. Involved in the regulation of the intracellular balance of NAD and NADP, and is a key enzyme in the biosynthesis of NADP. Catalyzes specifically the phosphorylation on 2'-hydroxyl of the adenosine moiety of NAD to yield NADP. This Escherichia coli O157:H7 protein is NAD kinase.